Reading from the N-terminus, the 380-residue chain is 4-hydroxy-3-methylbut-2-en-1-yl diphosphate synthase (flavodoxin) (380 aa).

4 residues coordinate [4Fe-4S] cluster: cysteine 275, cysteine 278, cysteine 310, and glutamate 317.

Belongs to the IspG family. It depends on [4Fe-4S] cluster as a cofactor.

It catalyses the reaction (2E)-4-hydroxy-3-methylbut-2-enyl diphosphate + oxidized [flavodoxin] + H2O + 2 H(+) = 2-C-methyl-D-erythritol 2,4-cyclic diphosphate + reduced [flavodoxin]. Its pathway is isoprenoid biosynthesis; isopentenyl diphosphate biosynthesis via DXP pathway; isopentenyl diphosphate from 1-deoxy-D-xylulose 5-phosphate: step 5/6. In terms of biological role, converts 2C-methyl-D-erythritol 2,4-cyclodiphosphate (ME-2,4cPP) into 1-hydroxy-2-methyl-2-(E)-butenyl 4-diphosphate. The protein is 4-hydroxy-3-methylbut-2-en-1-yl diphosphate synthase (flavodoxin) of Hyphomonas neptunium (strain ATCC 15444).